We begin with the raw amino-acid sequence, 144 residues long: Hexon-interlacing protein (144 aa).

Residues 106–133 (LTVMLAKLETLTAQLEELSQKVEELADA) are a coiled coil.

It belongs to the adenoviridae hexon-interlacing protein family. Homotrimer. Interacts with hexon protein; this interaction tethers the hexons together. Self-interacts with adjacent proteins. Interacts with kinesin light chain KLC1; this interaction leads to capsid disruption at the nuclear pore complex during virus entry into host cell.

Its subcellular location is the virion. It is found in the host nucleus. Its function is as follows. Structural component of the virion that acts as a cement protein on the capsid exterior and forms triskelion structures consisting of three molecules that stabilize three hexon trimers at the center of each icosahedral facet and fixes the peripentonal hexons. Dispensable for assembly. During virus entry, recruits the anterograde motor kinesin-1 to the capsid docked at the nuclear pore complex thereby subjecting the docked capsid to a pulling force. The resulting tension leads to capsid disruption, dispersion of capsid fragments toward cell periphery and eventually viral DNA entry into the host nucleus. The chain is Hexon-interlacing protein from Homo sapiens (Human).